The primary structure comprises 186 residues: Ribosome-recycling factor (186 aa).

Belongs to the RRF family.

It is found in the cytoplasm. Responsible for the release of ribosomes from messenger RNA at the termination of protein biosynthesis. May increase the efficiency of translation by recycling ribosomes from one round of translation to another. The protein is Ribosome-recycling factor of Prosthecochloris aestuarii (strain DSM 271 / SK 413).